The following is a 185-amino-acid chain: MANEVIEKAKDNMKKSIAVFQKELGGIRAGVANASLLDGIKVNYYGVPTPLTQMSSVSIPEARVLMVTPYDKSTLDDIEHAILASDLGITPANDGTVIRIVIPQLTGERRQEIAKQVGKLAEKGKIAVRNVRRDAMDTLKRQEKDGDITEDEQRSLEKQVQKVTDDATKEIDKLADQKSQEITQG.

The tract at residues 140–166 (KRQEKDGDITEDEQRSLEKQVQKVTDD) is disordered.

The protein belongs to the RRF family.

The protein resides in the cytoplasm. In terms of biological role, responsible for the release of ribosomes from messenger RNA at the termination of protein biosynthesis. May increase the efficiency of translation by recycling ribosomes from one round of translation to another. This Lactobacillus johnsonii (strain CNCM I-12250 / La1 / NCC 533) protein is Ribosome-recycling factor.